A 927-amino-acid polypeptide reads, in one-letter code: MLDDYYTWTYPDIPENVAQELLQLNGSLVVVGVVGRSDCDLANKMLAFGMEPPDDHTPEDGQIQCYYKPGTFSLLLHFESTYDAEISGQMIDVCIEDVDTPFDIDSFFERIRCRFVRMMLLALHVCHIVVWAKFAREQHLMQFLPQMLRETPAARISERTRLCAPRILFLFENFPGDEPKTRESVSTCEFQMEDCIYELLRRYNIVTNSSSNSLVALPNNKQFVFFNAHEELRDDKLLKAIDCLNETMYKPDLKEEEEDLEILAMAPFDGFVKPFTMPVYEKEWENLQYQEDHTVWNFLQRHVHDALVGCFDAGSFKQHAQQGPFQLLNSREWHDCMATMHKLLVENAKDPDHETSNEEYKLFLKNFDEDLNYEKKFWAHLCELGLKKGIAAYKNAAPANYGTATHRQLLADATLAFEEEGRGPQAQAALAKLAAICHKHWEDGRQQCEQLSLRSHPCTLPKNMPHEKHNSGVIHISTCNCGRTQGRREDPFNLRQANYEFYEHIAQMCNLCVKVKQYQFPIFEPSVSDYRAAAFEAAFPLLNTGKSGAPQDEDAGEDEAEEEEGQERELPTKKQLQNTASNCCSHPLSPTFGSDLNMSIAGFGASLKESQARSEQLSNSEQNTTRSGSSSVDTENELVVELQEPAKKEAREDVGPTDAVSTSTTEYLPGLVHTVSNFDLLPLFPSWSLACVGPSSIYSHNTGLQEHFQSGFLSGANFLLPWDVQLRLVHALKQQYQHHHHGKKQQRWKKQGDRLSLKIFVGMEYECSRGHRFMMCAPDRVLRGGADIERDTCSKVVHNNMPLYYPCPCRSQKNFLAQLMRIHVVTPKAPVNIIVDPKVCVGRYTFTLGSILPPRLSQSAYWIIRLPYVYQGDDVLIAPPDQLDPDYPLAGGYLLPGMFGVVETDPTLDLNEPGMMGASAAGNFTRI.

Disordered stretches follow at residues 543 to 581 (NTGK…NTAS), 611 to 636 (QARS…DTEN), and 643 to 662 (QEPA…AVST). Over residues 551–566 (QDEDAGEDEAEEEEGQ) the composition is skewed to acidic residues. A compositionally biased stretch (polar residues) spans 613–633 (RSEQLSNSEQNTTRSGSSSVD). A compositionally biased stretch (basic and acidic residues) spans 644-654 (EPAKKEAREDV).

This sequence belongs to the SMG8 family.

Involved in nonsense-mediated decay (NMD) of mRNAs containing premature stop codons. Probable component of kinase complex containing nonC and recruited to stalled ribosomes. This Drosophila sechellia (Fruit fly) protein is Nonsense-mediated mRNA decay factor SMG8.